Consider the following 349-residue polypeptide: MSKKKLSKGQQRRVSANHQRRLKKTESKVEWEDSQLGDAQEGIIISRFGMHADVEATDGVVRRCNIRRTISSLVTGDRVVWRPGHESLAGISGIVEAVHPRHSVLTRPDYYDGIKPIAANIDQIVIVSAILPELSLNIIDRYLVACETLEVEPLIVLNKIDLLDEKSRQLVDKSMDIYRALKYRVLMVSSHTQQGIPELEQALTDRISIFAGQSGVGKSSLLNALLALGEKRILVNEVSDNSGLGQHTTTASRLYHFPHGGDVIDSPGVREFGLWHLEPEQVTSGFIELREYIGSCKFRDCKHENDPGCAINAARERGDIARERFDNYHRILESMTQVKMRKGFSDTDN.

Residues 1 to 11 are compositionally biased toward basic residues; that stretch reads MSKKKLSKGQQ. A disordered region spans residues 1–29; it reads MSKKKLSKGQQRRVSANHQRRLKKTESKV. The CP-type G domain maps to 102–272; sequence HSVLTRPDYY…VIDSPGVREF (171 aa). GTP-binding positions include 158–161 and 212–220; these read NKID and GQSGVGKSS. Residues cysteine 296, cysteine 301, histidine 303, and cysteine 309 each contribute to the Zn(2+) site.

Belongs to the TRAFAC class YlqF/YawG GTPase family. RsgA subfamily. Monomer. Associates with 30S ribosomal subunit, binds 16S rRNA. Requires Zn(2+) as cofactor.

The protein localises to the cytoplasm. Its function is as follows. One of several proteins that assist in the late maturation steps of the functional core of the 30S ribosomal subunit. Helps release RbfA from mature subunits. May play a role in the assembly of ribosomal proteins into the subunit. Circularly permuted GTPase that catalyzes slow GTP hydrolysis, GTPase activity is stimulated by the 30S ribosomal subunit. The chain is Small ribosomal subunit biogenesis GTPase RsgA from Pectobacterium atrosepticum (strain SCRI 1043 / ATCC BAA-672) (Erwinia carotovora subsp. atroseptica).